We begin with the raw amino-acid sequence, 445 residues long: D-serine dehydratase (445 aa).

The residue at position 118 (Lys118) is an N6-(pyridoxal phosphate)lysine.

The protein belongs to the serine/threonine dehydratase family. DsdA subfamily. Monomer. Pyridoxal 5'-phosphate serves as cofactor.

It carries out the reaction D-serine = pyruvate + NH4(+). This chain is D-serine dehydratase, found in Serratia proteamaculans (strain 568).